Consider the following 222-residue polypeptide: Cell division protein FtsQ (222 aa).

Residues 1 to 5 (MNKKV) lie on the Cytoplasmic side of the membrane. A helical membrane pass occupies residues 6–26 (IAIVVGVVVVLVAILGVVAWF). At 27 to 222 (VPILKVGNIE…ISSPSMVTVR (196 aa)) the chain is on the extracellular side. One can recognise a POTRA domain in the interval 30–98 (LKVGNIEVTG…STITVELTER (69 aa)).

The protein belongs to the FtsQ/DivIB family. FtsQ subfamily.

Its subcellular location is the cell membrane. Essential cell division protein. In Corynebacterium glutamicum (strain ATCC 13032 / DSM 20300 / JCM 1318 / BCRC 11384 / CCUG 27702 / LMG 3730 / NBRC 12168 / NCIMB 10025 / NRRL B-2784 / 534), this protein is Cell division protein FtsQ.